Here is a 465-residue protein sequence, read N- to C-terminus: Siroheme synthase (465 aa).

The tract at residues 1 to 203 is precorrin-2 dehydrogenase /sirohydrochlorin ferrochelatase; it reads MEYLPLFHNL…GRTAEAERLL (203 aa). NAD(+)-binding positions include 22-23 and 43-44; these read EI and PS. Serine 128 is subject to Phosphoserine. Residues 216-465 are uroporphyrinogen-III C-methyltransferase; sequence GEVYLVGAGP…WFEGAQAAGR (250 aa). Proline 225 serves as a coordination point for S-adenosyl-L-methionine. The active-site Proton acceptor is aspartate 248. Lysine 270 functions as the Proton donor in the catalytic mechanism. Residues 301–303, isoleucine 306, 331–332, methionine 383, and glycine 412 contribute to the S-adenosyl-L-methionine site; these read GGD and TA.

In the N-terminal section; belongs to the precorrin-2 dehydrogenase / sirohydrochlorin ferrochelatase family. The protein in the C-terminal section; belongs to the precorrin methyltransferase family.

The catalysed reaction is uroporphyrinogen III + 2 S-adenosyl-L-methionine = precorrin-2 + 2 S-adenosyl-L-homocysteine + H(+). The enzyme catalyses precorrin-2 + NAD(+) = sirohydrochlorin + NADH + 2 H(+). It carries out the reaction siroheme + 2 H(+) = sirohydrochlorin + Fe(2+). Its pathway is cofactor biosynthesis; adenosylcobalamin biosynthesis; precorrin-2 from uroporphyrinogen III: step 1/1. It functions in the pathway cofactor biosynthesis; adenosylcobalamin biosynthesis; sirohydrochlorin from precorrin-2: step 1/1. It participates in porphyrin-containing compound metabolism; siroheme biosynthesis; precorrin-2 from uroporphyrinogen III: step 1/1. The protein operates within porphyrin-containing compound metabolism; siroheme biosynthesis; siroheme from sirohydrochlorin: step 1/1. Its pathway is porphyrin-containing compound metabolism; siroheme biosynthesis; sirohydrochlorin from precorrin-2: step 1/1. Functionally, multifunctional enzyme that catalyzes the SAM-dependent methylations of uroporphyrinogen III at position C-2 and C-7 to form precorrin-2 via precorrin-1. Then it catalyzes the NAD-dependent ring dehydrogenation of precorrin-2 to yield sirohydrochlorin. Finally, it catalyzes the ferrochelation of sirohydrochlorin to yield siroheme. This chain is Siroheme synthase, found in Stutzerimonas stutzeri (strain A1501) (Pseudomonas stutzeri).